The sequence spans 657 residues: tRNA 5-methylaminomethyl-2-thiouridine biosynthesis bifunctional protein MnmC (657 aa).

Positions 1–233 (MPRALEPAEP…KWQMTVASFR (233 aa)) are tRNA (mnm(5)s(2)U34)-methyltransferase. The segment at 257–657 (IGAGLAGCAV…LRALRHGHTG (401 aa)) is FAD-dependent cmnm(5)s(2)U34 oxidoreductase.

The protein in the N-terminal section; belongs to the methyltransferase superfamily. tRNA (mnm(5)s(2)U34)-methyltransferase family. It in the C-terminal section; belongs to the DAO family. FAD serves as cofactor.

It is found in the cytoplasm. It catalyses the reaction 5-aminomethyl-2-thiouridine(34) in tRNA + S-adenosyl-L-methionine = 5-methylaminomethyl-2-thiouridine(34) in tRNA + S-adenosyl-L-homocysteine + H(+). Its function is as follows. Catalyzes the last two steps in the biosynthesis of 5-methylaminomethyl-2-thiouridine (mnm(5)s(2)U) at the wobble position (U34) in tRNA. Catalyzes the FAD-dependent demodification of cmnm(5)s(2)U34 to nm(5)s(2)U34, followed by the transfer of a methyl group from S-adenosyl-L-methionine to nm(5)s(2)U34, to form mnm(5)s(2)U34. The chain is tRNA 5-methylaminomethyl-2-thiouridine biosynthesis bifunctional protein MnmC from Cupriavidus necator (strain ATCC 17699 / DSM 428 / KCTC 22496 / NCIMB 10442 / H16 / Stanier 337) (Ralstonia eutropha).